The primary structure comprises 47 residues: MLNFTWNVFSQTGNVDTYLLFKELEKENMERPEELEDELARFDYPIL.

This is an uncharacterized protein from Bacillus subtilis (strain 168).